The sequence spans 126 residues: MRHQKSGRKFNRTDAHRGAMFSNMVASLFKYQLIKTTLPKAKELRRVAEPLITLAKVDSVANRRLAFARLRNKEAVGILFSNLGPRYVTRPGGYIRLLKCGFRHGDNAPMAYVEMLERPIIAEEVT.

It belongs to the bacterial ribosomal protein bL17 family. In terms of assembly, part of the 50S ribosomal subunit. Contacts protein L32.

The protein is Large ribosomal subunit protein bL17 of Xylella fastidiosa (strain 9a5c).